The primary structure comprises 428 residues: Probable pectin lyase F (428 aa).

Residues 1–20 (MVLLHPLLTAAALLGASARA) form the signal peptide. Residues Cys83 and Cys107 are joined by a disulfide bond. Residue Arg257 is part of the active site. Residue Asn276 is glycosylated (N-linked (GlcNAc...) asparagine). An intrachain disulfide couples Cys324 to Cys332. Disordered regions lie at residues 337–367 (LTSSGELSGNDEAVLSGWPKGEGDTKAMTTD) and 383–428 (GSGG…HHHY). The span at 389 to 417 (AASSSASITPSPTSSAIPSSSATPSSSAY) shows a compositional bias: low complexity. Over residues 418 to 428 (ARRHYARHHHY) the composition is skewed to basic residues.

The protein belongs to the polysaccharide lyase 1 family.

It is found in the secreted. The enzyme catalyses Eliminative cleavage of (1-&gt;4)-alpha-D-galacturonan methyl ester to give oligosaccharides with 4-deoxy-6-O-methyl-alpha-D-galact-4-enuronosyl groups at their non-reducing ends.. Its function is as follows. Pectinolytic enzymes consist of four classes of enzymes: pectin lyase, polygalacturonase, pectin methylesterase and rhamnogalacturonase. Among pectinolytic enzymes, pectin lyase is the most important in depolymerization of pectin, since it cleaves internal glycosidic bonds of highly methylated pectins. This is Probable pectin lyase F (pelF) from Aspergillus flavus (strain ATCC 200026 / FGSC A1120 / IAM 13836 / NRRL 3357 / JCM 12722 / SRRC 167).